A 104-amino-acid polypeptide reads, in one-letter code: Large ribosomal subunit protein uL24 (104 aa).

It belongs to the universal ribosomal protein uL24 family. Part of the 50S ribosomal subunit.

In terms of biological role, one of two assembly initiator proteins, it binds directly to the 5'-end of the 23S rRNA, where it nucleates assembly of the 50S subunit. One of the proteins that surrounds the polypeptide exit tunnel on the outside of the subunit. This chain is Large ribosomal subunit protein uL24, found in Rhodopseudomonas palustris (strain BisB18).